The sequence spans 272 residues: Ribosomal RNA small subunit methyltransferase A (272 aa).

S-adenosyl-L-methionine contacts are provided by asparagine 18, leucine 20, glycine 45, glutamate 66, aspartate 91, and asparagine 113.

The protein belongs to the class I-like SAM-binding methyltransferase superfamily. rRNA adenine N(6)-methyltransferase family. RsmA subfamily.

Its subcellular location is the cytoplasm. The catalysed reaction is adenosine(1518)/adenosine(1519) in 16S rRNA + 4 S-adenosyl-L-methionine = N(6)-dimethyladenosine(1518)/N(6)-dimethyladenosine(1519) in 16S rRNA + 4 S-adenosyl-L-homocysteine + 4 H(+). Functionally, specifically dimethylates two adjacent adenosines (A1518 and A1519) in the loop of a conserved hairpin near the 3'-end of 16S rRNA in the 30S particle. May play a critical role in biogenesis of 30S subunits. The sequence is that of Ribosomal RNA small subunit methyltransferase A from Yersinia enterocolitica serotype O:8 / biotype 1B (strain NCTC 13174 / 8081).